The sequence spans 448 residues: MGPKKQKRELPEDFDPVYPYDVPQLQINPPFVSGDGFNQSVDGVLSLHIAPPLVFDNTRALTLAFGGGLQLSGKQLVVATEGSGLTTNPDGKLVLKVKSPITLTAEGISLSLGPGLSNSETGLSLQVTAPLQFQGNALTLPLAAGLQNTDGGMGVKLGSGLTTDNSQAVTVQVGNGLQLNGEGQLTVPATAPLVSGSAGISFNYSSNDFVLDNDSLSLRPKAISVTPPLQSTEDTISLNYSNDFSVDNGALTLAPTFKPYTLWTGASPTANVILTNTTTPNGTFFLCLTRVGGLVLGSFALKSSIDLTSMTKKVNFIFDGAGRLQSDSTYKGRFGFRSNDSVIEPTAAGLSPAWLMPSTFIYPRNTSGSSLTSFVYINQTYVHVDIKVNTLSTNGYSLEFNFQNMSFSAPFSTSYGTFCYVPRRTTHRPRHGPFSLRERRHLFQLLQQ.

The protein belongs to the adenoviridae fiber family. In terms of assembly, homotrimer. Interacts (via N-terminal tail region) with pentons.

The protein localises to the virion. Its subcellular location is the host nucleus. Functionally, forms spikes that protrude from each vertex of the icosahedral capsid. Interacts with host receptor to provide virion initial attachment to target cell. Fiber proteins are shed during virus entry, when virus is still at the cell surface. The chain is Fiber protein from Sus scrofa (Pig).